The chain runs to 474 residues: Light-independent protochlorophyllide reductase subunit N (474 aa).

Positions 22, 47, and 107 each coordinate [4Fe-4S] cluster.

Belongs to the BchN/ChlN family. Protochlorophyllide reductase is composed of three subunits; ChlL, ChlN and ChlB. Forms a heterotetramer of two ChlB and two ChlN subunits. [4Fe-4S] cluster serves as cofactor.

It localises to the plastid. Its subcellular location is the chloroplast. The catalysed reaction is chlorophyllide a + oxidized 2[4Fe-4S]-[ferredoxin] + 2 ADP + 2 phosphate = protochlorophyllide a + reduced 2[4Fe-4S]-[ferredoxin] + 2 ATP + 2 H2O. The protein operates within porphyrin-containing compound metabolism; chlorophyll biosynthesis (light-independent). Functionally, component of the dark-operative protochlorophyllide reductase (DPOR) that uses Mg-ATP and reduced ferredoxin to reduce ring D of protochlorophyllide (Pchlide) to form chlorophyllide a (Chlide). This reaction is light-independent. The NB-protein (ChlN-ChlB) is the catalytic component of the complex. The polypeptide is Light-independent protochlorophyllide reductase subunit N (Physcomitrium patens (Spreading-leaved earth moss)).